The sequence spans 428 residues: Flotillin-2 (428 aa).

Glycine 2 carries the N-myristoyl glycine lipid modification. Cysteine 4 carries S-palmitoyl cysteine; by ZDHHC5 lipidation. Residue cysteine 19 is the site of S-palmitoyl cysteine attachment. Cysteine 20 is lipidated: S-palmitoyl cysteine; by ZDHHC5. Phosphoserine is present on serine 405.

Belongs to the band 7/mec-2 family. Flotillin subfamily. In terms of assembly, heterooligomeric complex of flotillin-1 and flotillin-2 and caveolin-1 and caveolin-2. Interacts with ECPAS. In terms of processing, ZDHHC5-catalyzed palmitoylation may be required for the formation of higher-order complexes and for neurite outgrowth in cultured neural stem cells.

It localises to the cell membrane. Its subcellular location is the membrane. The protein resides in the caveola. It is found in the endosome. Its function is as follows. May act as a scaffolding protein within caveolar membranes, functionally participating in formation of caveolae or caveolae-like vesicles. May be involved in epidermal cell adhesion and epidermal structure and function. The chain is Flotillin-2 (FLOT2) from Bos taurus (Bovine).